The chain runs to 185 residues: Ribosome-recycling factor (185 aa).

The protein belongs to the RRF family.

Its subcellular location is the cytoplasm. Functionally, responsible for the release of ribosomes from messenger RNA at the termination of protein biosynthesis. May increase the efficiency of translation by recycling ribosomes from one round of translation to another. In Tolumonas auensis (strain DSM 9187 / NBRC 110442 / TA 4), this protein is Ribosome-recycling factor.